Here is an 80-residue protein sequence, read N- to C-terminus: Translation initiation factor IF-1 (80 aa).

Positions 6 to 80 constitute an S1-like domain; that stretch reads EKRKKEESDV…TSRGRIVYRK (75 aa).

The protein belongs to the IF-1 family. As to quaternary structure, component of the 30S ribosomal translation pre-initiation complex which assembles on the 30S ribosome in the order IF-2 and IF-3, IF-1 and N-formylmethionyl-tRNA(fMet); mRNA recruitment can occur at any time during PIC assembly.

It is found in the cytoplasm. One of the essential components for the initiation of protein synthesis. Stabilizes the binding of IF-2 and IF-3 on the 30S subunit to which N-formylmethionyl-tRNA(fMet) subsequently binds. Helps modulate mRNA selection, yielding the 30S pre-initiation complex (PIC). Upon addition of the 50S ribosomal subunit IF-1, IF-2 and IF-3 are released leaving the mature 70S translation initiation complex. The polypeptide is Translation initiation factor IF-1 (Deinococcus geothermalis (strain DSM 11300 / CIP 105573 / AG-3a)).